The following is a 223-amino-acid chain: F420-dependent NADP reductase (223 aa).

Residues Thr9 to Gln12, Ser30 to Arg31, Lys35, Leu75, and Val101 each bind NADP(+).

Belongs to the F420-dependent NADP reductase family.

The catalysed reaction is reduced coenzyme F420-(gamma-L-Glu)(n) + NADP(+) = oxidized coenzyme F420-(gamma-L-Glu)(n) + NADPH + 2 H(+). Functionally, catalyzes the reduction of NADP(+) with F420H(2) via hydride transfer, and the reverse reaction, i.e. the reduction of F420 with NADPH. Probably functions in the regeneration of NADPH required in biosynthetic reactions. This is F420-dependent NADP reductase (fno) from Methanocaldococcus jannaschii (strain ATCC 43067 / DSM 2661 / JAL-1 / JCM 10045 / NBRC 100440) (Methanococcus jannaschii).